A 299-amino-acid chain; its full sequence is Spermatocyte protein spe-11 (299 aa).

The interval 1–38 is disordered; that stretch reads MSDEEIDISTALNNKTTPKKKSLKRNSNSQEGYESPEE.

In terms of tissue distribution, expressed in mature sperm.

The protein localises to the cytoplasm. Its subcellular location is the perinuclear region. Its function is as follows. Paternally sperm-supplied factor required for embryogenesis. Plays a role in preventing polyspermy possibly by promoting the formation of a continuous and cohesive eggshell chitin layer. This Caenorhabditis elegans protein is Spermatocyte protein spe-11 (spe-11).